Consider the following 717-residue polypeptide: F-box only protein 42 (717 aa).

The span at 1 to 30 shows a compositional bias: acidic residues; sequence MASSSDSEDDSVMAVDQEETALEGTMEQDE. Residues 1-34 are disordered; it reads MASSSDSEDDSVMAVDQEETALEGTMEQDEDPHP. One can recognise an F-box domain in the interval 44–93; it reads NRSMSELPEEVLEYILSFLSPYQEHKTAALVCKQWYRLIKGVAHQCYHGF. Kelch repeat units follow at residues 132-184, 186-242, 244-293, and 295-342; these read SMYV…VYKD, LVLF…VIGD, MIVF…VIDD, and TLLI…LWCH. Residues 361-452 are disordered; the sequence is RAPLSPSLNS…NLSPGTVAVG (92 aa). Residues 363-376 are compositionally biased toward low complexity; that stretch reads PLSPSLNSRPSPIS. Residues Ser365 and Ser373 each carry the phosphoserine modification. At Thr378 the chain carries Phosphothreonine. Residues 416 to 426 show a composition bias toward polar residues; that stretch reads QRQTPSGSREG. Residue Ser552 is modified to Phosphoserine. Over residues 570-595 the composition is skewed to low complexity; sequence GPSASAALSPPLGSSPSSPGSQSLSS. The segment at 570–632 is disordered; it reads GPSASAALSP…HHPPQSLNVG (63 aa).

In terms of assembly, component of some SCF complex, composed of CUL1, SKP1, RBX1 and FBXO42. Interacts (via the kelch domain) with p53/TP53; interaction is direct.

Functionally, substrate-recognition component of some SCF (SKP1-CUL1-F-box protein)-type E3 ubiquitin ligase complex. Specifically recognizes p53/TP53, promoting its ubiquitination and degradation. The sequence is that of F-box only protein 42 (Fbxo42) from Mus musculus (Mouse).